The chain runs to 71 residues: Metallothionein-like protein 1 (71 aa).

Belongs to the metallothionein superfamily. Type 15 family.

In terms of biological role, metallothioneins have a high content of cysteine residues that bind various heavy metals. This chain is Metallothionein-like protein 1 (MT1), found in Casuarina glauca (Swamp oak).